The sequence spans 444 residues: UPF0761 membrane protein RC1_0578 (444 aa).

6 helical membrane passes run 49 to 69 (LLAL…FPAY), 103 to 123 (AAAL…LLFF), 145 to 165 (LLSF…SLSV), 186 to 206 (FMLP…MIPN), 219 to 239 (IAAA…IAAF), and 248 to 268 (ALSV…VVLF). Residues 423-444 (SGQPSGQVETAVRQRTGLQGRI) are disordered.

Belongs to the UPF0761 family.

The protein resides in the cell inner membrane. In Rhodospirillum centenum (strain ATCC 51521 / SW), this protein is UPF0761 membrane protein RC1_0578.